Here is a 607-residue protein sequence, read N- to C-terminus: Elongation factor 4 (607 aa).

Residues 11 to 193 (KSIRNFSIIA…QIVAKVPAPT (183 aa)) form the tr-type G domain. GTP is bound by residues 23–28 (DHGKST) and 140–143 (NKID).

This sequence belongs to the TRAFAC class translation factor GTPase superfamily. Classic translation factor GTPase family. LepA subfamily.

The protein resides in the cell membrane. It catalyses the reaction GTP + H2O = GDP + phosphate + H(+). Its function is as follows. Required for accurate and efficient protein synthesis under certain stress conditions. May act as a fidelity factor of the translation reaction, by catalyzing a one-codon backward translocation of tRNAs on improperly translocated ribosomes. Back-translocation proceeds from a post-translocation (POST) complex to a pre-translocation (PRE) complex, thus giving elongation factor G a second chance to translocate the tRNAs correctly. Binds to ribosomes in a GTP-dependent manner. The sequence is that of Elongation factor 4 from Exiguobacterium sibiricum (strain DSM 17290 / CCUG 55495 / CIP 109462 / JCM 13490 / 255-15).